The sequence spans 301 residues: GTPase Era (301 aa).

In terms of domain architecture, Era-type G spans 4-173; sequence KAGFVALIGK…LECISKHLSP (170 aa). The segment at 12–19 is G1; that stretch reads GKPNAGKS. Position 12 to 19 (12 to 19) interacts with GTP; the sequence is GKPNAGKS. Residues 38 to 42 form a G2 region; that stretch reads NATRK. The interval 64–67 is G3; it reads DTPG. GTP contacts are provided by residues 64–68 and 122–125; these read DTPGL and SKID. Residues 122–125 are G4; the sequence is SKID. The G5 stretch occupies residues 152–154; it reads LSA. The region spanning 204-280 is the KH type-2 domain; it reads LSDEIPYESD…FLNLQVIAQK (77 aa).

The protein belongs to the TRAFAC class TrmE-Era-EngA-EngB-Septin-like GTPase superfamily. Era GTPase family. In terms of assembly, monomer.

The protein localises to the cytoplasm. It is found in the cell inner membrane. Its function is as follows. An essential GTPase that binds both GDP and GTP, with rapid nucleotide exchange. Plays a role in 16S rRNA processing and 30S ribosomal subunit biogenesis and possibly also in cell cycle regulation and energy metabolism. This Helicobacter pylori (strain Shi470) protein is GTPase Era.